Here is a 1295-residue protein sequence, read N- to C-terminus: Phosphoribosylformylglycinamidine synthase (1295 aa).

The disordered stretch occupies residues 305–327 (WPGAATGSGGEIRDEGATGRGAK). Residues 307–318 (GAATGSGGEIRD) and A678 contribute to the ATP site. E718, N722, and D884 together coordinate Mg(2+). S886 lines the ATP pocket. The Glutamine amidotransferase type-1 domain maps to 1042 to 1295 (VAVLREQGVN…IFRNARKQLG (254 aa)). The active-site Nucleophile is the C1135. Catalysis depends on residues H1260 and E1262.

In the N-terminal section; belongs to the FGAMS family. As to quaternary structure, monomer. Both N-terminus methionine truncation and retention have been observed for this protein.

Its subcellular location is the cytoplasm. The enzyme catalyses N(2)-formyl-N(1)-(5-phospho-beta-D-ribosyl)glycinamide + L-glutamine + ATP + H2O = 2-formamido-N(1)-(5-O-phospho-beta-D-ribosyl)acetamidine + L-glutamate + ADP + phosphate + H(+). It functions in the pathway purine metabolism; IMP biosynthesis via de novo pathway; 5-amino-1-(5-phospho-D-ribosyl)imidazole from N(2)-formyl-N(1)-(5-phospho-D-ribosyl)glycinamide: step 1/2. In terms of biological role, phosphoribosylformylglycinamidine synthase involved in the purines biosynthetic pathway. Catalyzes the ATP-dependent conversion of formylglycinamide ribonucleotide (FGAR) and glutamine to yield formylglycinamidine ribonucleotide (FGAM) and glutamate. The sequence is that of Phosphoribosylformylglycinamidine synthase from Escherichia coli (strain K12).